A 172-amino-acid polypeptide reads, in one-letter code: uncharacterized protein (172 aa).

3 helical membrane passes run 44–68, 86–110, and 117–135; these read VLVSSVLGALKVILIPCASTYAALT, LASYAMAWLLNILTIAVIIGLVFSL, and VVFISLGLLMSVTTSVTLF.

Belongs to the chlamydial CPn_0442/CT_006/TC_0274 family.

The protein resides in the cell membrane. This is an uncharacterized protein from Chlamydia pneumoniae (Chlamydophila pneumoniae).